The chain runs to 203 residues: Small ribosomal subunit protein uS4c (203 aa).

The interval 15–43 (LGSLPGLTSKRPRSGSDLRNQSRSGKRSQ) is disordered. The region spanning 89–169 (MRLDNILFRL…LPKHLTLHSL (81 aa)) is the S4 RNA-binding domain.

The protein belongs to the universal ribosomal protein uS4 family. As to quaternary structure, part of the 30S ribosomal subunit. Contacts protein S5. The interaction surface between S4 and S5 is involved in control of translational fidelity.

The protein localises to the plastid. It localises to the chloroplast. One of the primary rRNA binding proteins, it binds directly to 16S rRNA where it nucleates assembly of the body of the 30S subunit. Its function is as follows. With S5 and S12 plays an important role in translational accuracy. The polypeptide is Small ribosomal subunit protein uS4c (rps4) (Illicium oligandrum (Star anise)).